A 417-amino-acid polypeptide reads, in one-letter code: UDP-N-acetylglucosamine 1-carboxyvinyltransferase (417 aa).

22–23 lines the phosphoenolpyruvate pocket; sequence KN. Arg-92 is a UDP-N-acetyl-alpha-D-glucosamine binding site. The active-site Proton donor is Cys-116. The residue at position 116 (Cys-116) is a 2-(S-cysteinyl)pyruvic acid O-phosphothioketal. UDP-N-acetyl-alpha-D-glucosamine-binding residues include Asp-304 and Ile-326.

Belongs to the EPSP synthase family. MurA subfamily.

Its subcellular location is the cytoplasm. It carries out the reaction phosphoenolpyruvate + UDP-N-acetyl-alpha-D-glucosamine = UDP-N-acetyl-3-O-(1-carboxyvinyl)-alpha-D-glucosamine + phosphate. Its pathway is cell wall biogenesis; peptidoglycan biosynthesis. Its function is as follows. Cell wall formation. Adds enolpyruvyl to UDP-N-acetylglucosamine. This Geotalea daltonii (strain DSM 22248 / JCM 15807 / FRC-32) (Geobacter daltonii) protein is UDP-N-acetylglucosamine 1-carboxyvinyltransferase.